We begin with the raw amino-acid sequence, 297 residues long: Ribosomal RNA small subunit methyltransferase H (297 aa).

Residues glycine 30–tyrosine 32, aspartate 48, phenylalanine 75, aspartate 96, and glutamine 103 contribute to the S-adenosyl-L-methionine site.

It belongs to the methyltransferase superfamily. RsmH family.

Its subcellular location is the cytoplasm. The enzyme catalyses cytidine(1402) in 16S rRNA + S-adenosyl-L-methionine = N(4)-methylcytidine(1402) in 16S rRNA + S-adenosyl-L-homocysteine + H(+). In terms of biological role, specifically methylates the N4 position of cytidine in position 1402 (C1402) of 16S rRNA. This Ehrlichia canis (strain Jake) protein is Ribosomal RNA small subunit methyltransferase H.